The following is a 639-amino-acid chain: Chaperone protein DnaK (639 aa).

Thr-196 carries the phosphothreonine; by autocatalysis modification. The disordered stretch occupies residues 592–639 (ASSLYQTPDAGAPGASGPSAGGEPETGKKGGDGEVQNAEYEVIDGNDK). The segment covering 601-613 (AGAPGASGPSAGG) has biased composition (low complexity).

This sequence belongs to the heat shock protein 70 family.

Functionally, acts as a chaperone. In Chlorobium limicola (strain DSM 245 / NBRC 103803 / 6330), this protein is Chaperone protein DnaK.